A 286-amino-acid chain; its full sequence is ATP synthase gamma chain (286 aa).

This sequence belongs to the ATPase gamma chain family. As to quaternary structure, F-type ATPases have 2 components, CF(1) - the catalytic core - and CF(0) - the membrane proton channel. CF(1) has five subunits: alpha(3), beta(3), gamma(1), delta(1), epsilon(1). CF(0) has three main subunits: a, b and c.

The protein localises to the cell inner membrane. Produces ATP from ADP in the presence of a proton gradient across the membrane. The gamma chain is believed to be important in regulating ATPase activity and the flow of protons through the CF(0) complex. The chain is ATP synthase gamma chain from Fuscovulum blasticum (Rhodobacter blasticus).